A 451-amino-acid polypeptide reads, in one-letter code: CDP-diacylglycerol--serine O-phosphatidyltransferase PssA (451 aa).

PLD phosphodiesterase domains follow at residues 27-224 and 239-451; these read VDFF…ELRD and SVTP…SRIL. Residues Leu-56, Tyr-57, Arg-91, Arg-94, Arg-96, Ile-97, Glu-132, Ala-133, Val-136, His-138, Lys-140, Gly-152, Tyr-159, and Arg-167 each coordinate a CDP-1,2-diacyl-sn-glycerol. His-138 is an active-site residue. Asp-169 is a catalytic residue. Residues Tyr-273, Asp-305, Phe-306, Ile-316, Ile-317, Leu-320, Leu-323, and Tyr-324 each contribute to the a CDP-1,2-diacyl-sn-glycerol site. The active site involves His-357. Lys-359, Asn-374, and Arg-378 together coordinate a CDP-1,2-diacyl-sn-glycerol. Glu-385 is a catalytic residue. Residues Leu-438, Ile-447, Ile-450, and Leu-451 each contribute to the a CDP-1,2-diacyl-sn-glycerol site.

Belongs to the CDP-alcohol phosphatidyltransferase class-II family. In terms of assembly, multimeric. Interacts with ACP, YbgC and PlsB, forming altogether a complex at the inner membrane. Monomeric and dimeric; existing in equilibrium, but the monomer probably exhibits preferential membrane association.

It is found in the cytoplasm. The protein resides in the cell inner membrane. The enzyme catalyses a CDP-1,2-diacyl-sn-glycerol + L-serine = a 1,2-diacyl-sn-glycero-3-phospho-L-serine + CMP + H(+). The protein operates within phospholipid metabolism; phosphatidylethanolamine biosynthesis; phosphatidylethanolamine from CDP-diacylglycerol: step 1/2. Catalyzes the conversion of cytidine diphosphate diacylglycerol (CDP-DG) and L-serine into phosphatidylserine. Essential for biosynthesis of phosphatidylethanolamine, one of the major membrane phospholipids. Phosphatidylserine is later converted into phosphatidylethanolamine via the action of phosphatidylserine decarboxylase psd. Associates with the bacterial membrane for its role, which depends on the levels of anionic phospholipids in the membrane. This Escherichia coli (strain K12) protein is CDP-diacylglycerol--serine O-phosphatidyltransferase PssA (pssA).